A 253-amino-acid chain; its full sequence is MSSFAKRIIPCLDVDNGRVVKGVNFVGLRDAGDPVEVAKRYNSEGADEITFLDITASHENRGTIVDIVKKVAQEVFIPLTVGGGIRKLEDIYSLLNVGCDKVSINSSAVTNPNLINESSKRFGSQCIVVAIDVKRVADGSYHVFVKGGREDTGLDALSWAKEVYDRGAGEILLTSMDTDGAKTGFELNITRQVSNLVDIPVIASGGAGSMEHIKEAFENGASAALAASIFHFKEIDIMDLKKYLRANNIPVRI.

Residues aspartate 13 and aspartate 132 contribute to the active site.

The protein belongs to the HisA/HisF family. In terms of assembly, heterodimer of HisH and HisF.

The protein localises to the cytoplasm. It carries out the reaction 5-[(5-phospho-1-deoxy-D-ribulos-1-ylimino)methylamino]-1-(5-phospho-beta-D-ribosyl)imidazole-4-carboxamide + L-glutamine = D-erythro-1-(imidazol-4-yl)glycerol 3-phosphate + 5-amino-1-(5-phospho-beta-D-ribosyl)imidazole-4-carboxamide + L-glutamate + H(+). The protein operates within amino-acid biosynthesis; L-histidine biosynthesis; L-histidine from 5-phospho-alpha-D-ribose 1-diphosphate: step 5/9. Its function is as follows. IGPS catalyzes the conversion of PRFAR and glutamine to IGP, AICAR and glutamate. The HisF subunit catalyzes the cyclization activity that produces IGP and AICAR from PRFAR using the ammonia provided by the HisH subunit. The sequence is that of Imidazole glycerol phosphate synthase subunit HisF from Aliarcobacter butzleri (strain RM4018) (Arcobacter butzleri).